We begin with the raw amino-acid sequence, 154 residues long: Deoxyuridine 5'-triphosphate nucleotidohydrolase (154 aa).

Substrate is bound by residues 72–74, N85, 89–91, and M99; these read RSG and LID.

This sequence belongs to the dUTPase family. Mg(2+) is required as a cofactor.

It carries out the reaction dUTP + H2O = dUMP + diphosphate + H(+). It participates in pyrimidine metabolism; dUMP biosynthesis; dUMP from dCTP (dUTP route): step 2/2. In terms of biological role, this enzyme is involved in nucleotide metabolism: it produces dUMP, the immediate precursor of thymidine nucleotides and it decreases the intracellular concentration of dUTP so that uracil cannot be incorporated into DNA. The protein is Deoxyuridine 5'-triphosphate nucleotidohydrolase of Psychrobacter cryohalolentis (strain ATCC BAA-1226 / DSM 17306 / VKM B-2378 / K5).